The primary structure comprises 144 residues: Small ribosomal subunit protein eS19A (144 aa).

The protein belongs to the eukaryotic ribosomal protein eS19 family. In terms of assembly, component of the small ribosomal subunit (SSU). Mature yeast ribosomes consist of a small (40S) and a large (60S) subunit. The 40S small subunit contains 1 molecule of ribosomal RNA (18S rRNA) and 33 different proteins (encoded by 57 genes). The large 60S subunit contains 3 rRNA molecules (25S, 5.8S and 5S rRNA) and 46 different proteins (encoded by 81 genes).

Its subcellular location is the cytoplasm. Component of the ribosome, a large ribonucleoprotein complex responsible for the synthesis of proteins in the cell. The small ribosomal subunit (SSU) binds messenger RNAs (mRNAs) and translates the encoded message by selecting cognate aminoacyl-transfer RNA (tRNA) molecules. The large subunit (LSU) contains the ribosomal catalytic site termed the peptidyl transferase center (PTC), which catalyzes the formation of peptide bonds, thereby polymerizing the amino acids delivered by tRNAs into a polypeptide chain. The nascent polypeptides leave the ribosome through a tunnel in the LSU and interact with protein factors that function in enzymatic processing, targeting, and the membrane insertion of nascent chains at the exit of the ribosomal tunnel. eS19 is required for proper maturation of the small (40S) ribosomal subunit. Binds to 40S pre-ribosomal particles, probably required after association of NOC4 but before association of ENP1, TSR1 and RIO2 with 20/21S pre-rRNA. The chain is Small ribosomal subunit protein eS19A from Saccharomyces cerevisiae (strain ATCC 204508 / S288c) (Baker's yeast).